The sequence spans 189 residues: uncharacterized protein (189 aa).

The next 3 membrane-spanning stretches (helical) occupy residues 2 to 22, 93 to 113, and 116 to 136; these read LVVVSLTPPVGVCVGLFHHLL, ILFYFYFVLILFYFIALYFIL, and FYSTILFFFPLFIKCSHLHTL.

It localises to the membrane. This is an uncharacterized protein from Schizosaccharomyces pombe (strain 972 / ATCC 24843) (Fission yeast).